Here is a 50-residue protein sequence, read N- to C-terminus: Small ribosomal subunit protein uS14 (50 aa).

4 residues coordinate Zn(2+): Cys-15, Cys-18, Cys-33, and Cys-36.

It belongs to the universal ribosomal protein uS14 family. Zinc-binding uS14 subfamily. In terms of assembly, part of the 30S ribosomal subunit. Requires Zn(2+) as cofactor.

Binds 16S rRNA, required for the assembly of 30S particles. This chain is Small ribosomal subunit protein uS14, found in Methanosarcina mazei (strain ATCC BAA-159 / DSM 3647 / Goe1 / Go1 / JCM 11833 / OCM 88) (Methanosarcina frisia).